The primary structure comprises 513 residues: ATP synthase subunit alpha (513 aa).

Glycine 169–threonine 176 provides a ligand contact to ATP.

It belongs to the ATPase alpha/beta chains family. In terms of assembly, F-type ATPases have 2 components, CF(1) - the catalytic core - and CF(0) - the membrane proton channel. CF(1) has five subunits: alpha(3), beta(3), gamma(1), delta(1), epsilon(1). CF(0) has three main subunits: a(1), b(2) and c(9-12). The alpha and beta chains form an alternating ring which encloses part of the gamma chain. CF(1) is attached to CF(0) by a central stalk formed by the gamma and epsilon chains, while a peripheral stalk is formed by the delta and b chains.

The protein localises to the cell inner membrane. It carries out the reaction ATP + H2O + 4 H(+)(in) = ADP + phosphate + 5 H(+)(out). In terms of biological role, produces ATP from ADP in the presence of a proton gradient across the membrane. The alpha chain is a regulatory subunit. The polypeptide is ATP synthase subunit alpha (Ruegeria sp. (strain TM1040) (Silicibacter sp.)).